Reading from the N-terminus, the 316-residue chain is Acetyl-coenzyme A carboxylase carboxyl transferase subunit alpha (316 aa).

Residues 39–293 (KLEEKNAQLT…KKHLQANLTN (255 aa)) enclose the CoA carboxyltransferase C-terminal domain.

Belongs to the AccA family. In terms of assembly, acetyl-CoA carboxylase is a heterohexamer composed of biotin carboxyl carrier protein (AccB), biotin carboxylase (AccC) and two subunits each of ACCase subunit alpha (AccA) and ACCase subunit beta (AccD).

It is found in the cytoplasm. The enzyme catalyses N(6)-carboxybiotinyl-L-lysyl-[protein] + acetyl-CoA = N(6)-biotinyl-L-lysyl-[protein] + malonyl-CoA. It functions in the pathway lipid metabolism; malonyl-CoA biosynthesis; malonyl-CoA from acetyl-CoA: step 1/1. In terms of biological role, component of the acetyl coenzyme A carboxylase (ACC) complex. First, biotin carboxylase catalyzes the carboxylation of biotin on its carrier protein (BCCP) and then the CO(2) group is transferred by the carboxyltransferase to acetyl-CoA to form malonyl-CoA. The protein is Acetyl-coenzyme A carboxylase carboxyl transferase subunit alpha of Coxiella burnetii (strain RSA 331 / Henzerling II).